The following is a 113-amino-acid chain: Nucleoid-associated protein Synpcc7942_0464 (113 aa).

The protein belongs to the YbaB/EbfC family. As to quaternary structure, homodimer.

The protein resides in the cytoplasm. It localises to the nucleoid. In terms of biological role, binds to DNA and alters its conformation. May be involved in regulation of gene expression, nucleoid organization and DNA protection. This is Nucleoid-associated protein Synpcc7942_0464 from Synechococcus elongatus (strain ATCC 33912 / PCC 7942 / FACHB-805) (Anacystis nidulans R2).